Reading from the N-terminus, the 433-residue chain is Phosphomethylpyrimidine synthase 1 (433 aa).

Residues M95, Y124, H163, 185 to 187 (SRG), 226 to 229 (NAMR), and E265 each bind substrate. H269 is a Zn(2+) binding site. Residue Y292 participates in substrate binding. A Zn(2+)-binding site is contributed by H333. C408, C411, and C415 together coordinate [4Fe-4S] cluster.

Belongs to the ThiC family. Requires [4Fe-4S] cluster as cofactor.

It carries out the reaction 5-amino-1-(5-phospho-beta-D-ribosyl)imidazole + S-adenosyl-L-methionine = 4-amino-2-methyl-5-(phosphooxymethyl)pyrimidine + CO + 5'-deoxyadenosine + formate + L-methionine + 3 H(+). Its pathway is cofactor biosynthesis; thiamine diphosphate biosynthesis. Catalyzes the synthesis of the hydroxymethylpyrimidine phosphate (HMP-P) moiety of thiamine from aminoimidazole ribotide (AIR) in a radical S-adenosyl-L-methionine (SAM)-dependent reaction. The protein is Phosphomethylpyrimidine synthase 1 of Methanothermobacter thermautotrophicus (strain ATCC 29096 / DSM 1053 / JCM 10044 / NBRC 100330 / Delta H) (Methanobacterium thermoautotrophicum).